The following is a 1385-amino-acid chain: DNA-directed RNA polymerase subunit beta (1385 aa).

This sequence belongs to the RNA polymerase beta chain family. The RNAP catalytic core consists of 2 alpha, 1 beta, 1 beta' and 1 omega subunit. When a sigma factor is associated with the core the holoenzyme is formed, which can initiate transcription.

The enzyme catalyses RNA(n) + a ribonucleoside 5'-triphosphate = RNA(n+1) + diphosphate. Functionally, DNA-dependent RNA polymerase catalyzes the transcription of DNA into RNA using the four ribonucleoside triphosphates as substrates. This is DNA-directed RNA polymerase subunit beta from Sulfurovum sp. (strain NBC37-1).